A 464-amino-acid polypeptide reads, in one-letter code: Sensor protein IrlS (464 aa).

Topologically, residues 1 to 13 are periplasmic; sequence MIRRLLPRTLRAR. The chain crosses the membrane as a helical span at residues 14–34; that stretch reads LTALIILSTAATLALSGVALY. The Cytoplasmic segment spans residues 35 to 166; sequence SALHNRLVGM…DHALLRAYAY (132 aa). The helical transmembrane segment at 167–187 threads the bilayer; that stretch reads TVVVIEVLAVVLTAALAYGIA. An HAMP domain is found at 188 to 241; that stretch reads MLGLSPLRRLVARAEQMSSSRLAQPLPELDTSGELKEMEHAFNAMLKRLDESFV. Residues 188 to 464 lie on the Periplasmic side of the membrane; that stretch reads MLGLSPLRRL…FWLKFPAHAA (277 aa). One can recognise a Histidine kinase domain in the interval 249–463; it reads NLAHDMRTPL…TFWLKFPAHA (215 aa). His252 is modified (phosphohistidine; by autocatalysis).

Its subcellular location is the cell inner membrane. It catalyses the reaction ATP + protein L-histidine = ADP + protein N-phospho-L-histidine.. Functionally, member of the two-component regulatory system IrlR/IrlS. May be involved in invasion of eukaryotic cells and heavy-metal resistance. Probably activates IrlR by phosphorylation. This chain is Sensor protein IrlS (irlS), found in Burkholderia pseudomallei (strain K96243).